We begin with the raw amino-acid sequence, 285 residues long: Shikimate dehydrogenase (NADP(+)) (285 aa).

Residues 20–22 (SIS) and S67 each bind shikimate. Catalysis depends on K71, which acts as the Proton acceptor. N92 and D107 together coordinate shikimate. NADP(+) is bound by residues 129–133 (GAGGA) and I227. Y229 serves as a coordination point for shikimate. G250 contacts NADP(+).

It belongs to the shikimate dehydrogenase family. Homodimer.

The enzyme catalyses shikimate + NADP(+) = 3-dehydroshikimate + NADPH + H(+). It functions in the pathway metabolic intermediate biosynthesis; chorismate biosynthesis; chorismate from D-erythrose 4-phosphate and phosphoenolpyruvate: step 4/7. Its function is as follows. Involved in the biosynthesis of the chorismate, which leads to the biosynthesis of aromatic amino acids. Catalyzes the reversible NADPH linked reduction of 3-dehydroshikimate (DHSA) to yield shikimate (SA). The chain is Shikimate dehydrogenase (NADP(+)) from Streptococcus thermophilus (strain ATCC BAA-491 / LMD-9).